The sequence spans 241 residues: Carboxy-S-adenosyl-L-methionine synthase (241 aa).

S-adenosyl-L-methionine-binding positions include Y38, 63 to 65 (GCS), 88 to 89 (DN), 116 to 117 (DI), N131, and R198.

This sequence belongs to the class I-like SAM-binding methyltransferase superfamily. Cx-SAM synthase family. Homodimer.

It carries out the reaction prephenate + S-adenosyl-L-methionine = carboxy-S-adenosyl-L-methionine + 3-phenylpyruvate + H2O. Functionally, catalyzes the conversion of S-adenosyl-L-methionine (SAM) to carboxy-S-adenosyl-L-methionine (Cx-SAM). The chain is Carboxy-S-adenosyl-L-methionine synthase from Haemophilus influenzae (strain ATCC 51907 / DSM 11121 / KW20 / Rd).